Consider the following 64-residue polypeptide: Large ribosomal subunit protein uL29 (64 aa).

The protein belongs to the universal ribosomal protein uL29 family.

The polypeptide is Large ribosomal subunit protein uL29 (Levilactobacillus brevis (strain ATCC 367 / BCRC 12310 / CIP 105137 / JCM 1170 / LMG 11437 / NCIMB 947 / NCTC 947) (Lactobacillus brevis)).